Here is a 291-residue protein sequence, read N- to C-terminus: Citrate lyase subunit beta (291 aa).

The substrate site is built by R66 and E129. Mg(2+) is bound by residues E129 and D156.

The protein belongs to the HpcH/HpaI aldolase family. Citrate lyase beta subunit subfamily. As to quaternary structure, oligomer with a subunit composition of (alpha,beta,gamma)6. Mg(2+) serves as cofactor.

It is found in the cytoplasm. It carries out the reaction citrate = oxaloacetate + acetate. The catalysed reaction is (3S)-citryl-CoA = oxaloacetate + acetyl-CoA. In terms of biological role, represents a citryl-ACP lyase. The protein is Citrate lyase subunit beta (citE) of Haemophilus influenzae (strain ATCC 51907 / DSM 11121 / KW20 / Rd).